Reading from the N-terminus, the 350-residue chain is Phosphotriesterase-related protein (350 aa).

6 residues coordinate a divalent metal cation: histidine 22, histidine 24, glutamate 169, histidine 201, histidine 230, and aspartate 298.

This sequence belongs to the metallo-dependent hydrolases superfamily. Phosphotriesterase family. A divalent metal cation serves as cofactor.

This is Phosphotriesterase-related protein from Drosophila mojavensis (Fruit fly).